Reading from the N-terminus, the 108-residue chain is MNLWEFRFGKSFLFIPNFIMKVLAFEELALFDIFDSLINVKINIYENGIECGFSFYKWDEFKGYKIEDKYIRLISKFPLIIRLIFVRDIYLRYDEELEGIIEKHLRQK.

Residues methionine 1–alanine 24 form the signal peptide.

This sequence to M.jannaschii MJ0803.

This is an uncharacterized protein from Methanocaldococcus jannaschii (strain ATCC 43067 / DSM 2661 / JAL-1 / JCM 10045 / NBRC 100440) (Methanococcus jannaschii).